The chain runs to 268 residues: Hydroxyethylthiazole kinase (268 aa).

Residue Met-45 participates in substrate binding. ATP contacts are provided by Arg-121 and Thr-167. Gly-194 contributes to the substrate binding site.

It belongs to the Thz kinase family. Mg(2+) serves as cofactor.

The catalysed reaction is 5-(2-hydroxyethyl)-4-methylthiazole + ATP = 4-methyl-5-(2-phosphooxyethyl)-thiazole + ADP + H(+). It participates in cofactor biosynthesis; thiamine diphosphate biosynthesis; 4-methyl-5-(2-phosphoethyl)-thiazole from 5-(2-hydroxyethyl)-4-methylthiazole: step 1/1. Functionally, catalyzes the phosphorylation of the hydroxyl group of 4-methyl-5-beta-hydroxyethylthiazole (THZ). The chain is Hydroxyethylthiazole kinase from Bacillus thuringiensis (strain Al Hakam).